A 2166-amino-acid chain; its full sequence is MSLRLQNPFLSTPLLHGSFNRREKRINVARRAFRSKRIYSEKKQNDWLAKVAKFSQFCGKNVQLLRKSLDSRSRMEVKCLKEPFVRSKDLVRSLAPVWEEGLFFLRCSVFFAVISGVCLLVWYGQNKARVFVETKLLPSVCSVLSETIQREVDFGKVRRVSPLCITLEASSIGPHGEEFSCGEVPTMKVCVRPFASLRRGKIVVDAILSNPTVLVAQKKDFTWLGIPLSDTTLPSHLSSEEGIDFRTKTRRVSREEAGIRWDEERDNDARKAAEIGYIVPCKNYSQAKDNAVKHDRRFTEIANPNSFICMDEKMHSAEQHCMDPGVEYDVKHAELEKSFGIKIPGSGLKFLSKMLKVPRKYKFKWNSKSHKNSMSNISAKKRILERSASAALSYFHSLSQQKLDEPSVLSTNYDGLSLDMLLVKGDREISNQYDRHVPYGEQSLANDLDGKGYRVRGKRLLGVKKASTLDKFTVSCDPFLMTVDRLCALLQTKRSPSVEDIVNSSESETLSSQRGDISMNVVNQNTDDVPHGNRSGNQPRDFTFKKHEHQPVANHWRPSWPRNKKLKEAVFNILTGSSKKLTGRADPNAPHLSDELEKLPAVYVEKTLPVMLDSVQFKGGTLLLLAYGDTEPREMRNVHGHVKFQNHYGRVYVQLGGNCNMWRSDVTSEDGGLLSVDVFVDTVEQNWHANLNVANFFVPIFERILEIPIEWSKGRATGEVHLCMSRGESFPNLHGQLDVTGLGFHINDAPSSFSDVSASLSFRGQRIFLHNANGWFGKVPLEASGDFGIHPDEGEFHLMCQVPYVEINALMKTFKMKPLFFPLAGSVTAVFNCQGPLDAPVFVGSCMVSRKIAYLSPDLPTSLAYEAMLKNKEAGAVAAFDRVPFSYLSANFTFNTDNCVADLYGIRATLVDGGEIRGAGNAWICPEGEVDDTALDVNFSGNISFDKVLHRYMPEYFNIGMLKLGDLTGETKLSGALLKPRFDIKWAAPKADGSLTDARGDIVISHDNIIVNSSSVAFDLFTKLDTSYHDPCLSHQDFTQGEAMPFVVEGLDLDLRMRGFEFFSLVSSYPFDSPRPTHLKATGRIKFLGKIKRHSTTKDGDVGSDKCEDAAAISSLDGDISISSLKLNQLILAPQLSGRLSVSRDHVKLDAAGRPDESLTLDFIGPLQPNSDENVQSGKLLSFSLQKGQLRANACFQPQQSATLEIRNFPLDELELASLRGLIQKAEIQLNLQKRRGHGLLSVIRPKFSGVLGEALDVAVRWSGDVCFMLSGRLEVMITVEKTILEQSNSRYELQGEYVLPGSRDRDLGQKEAGSFLMRAMTGHLGSVISSMGRWRMRLEVPKAEVAEMLPLARLLSRSTDPAVHSRSKDLFIQSVQNLCLQAENLRDLLEEIRGYYTPPSEVVLEDLSLPGLAELKGHWHGSLDASGGGNGDTLAEFDFHGDDWEWGTYKTQRVLATGSYNNDDGLRLKEMLIQKGNATLHADGTLLGPKTNLHFAVLNFPVSLIPTLVEVVESSATDIVHSLRKLLSPIKGILHMEGDLRGSLEKPECDVQVRLLDGAVGGIDLGRAEVFASLTSNSRFLFNSNFEPFVQNGHVHIQGSVPVSFSQKNMSEGEVSETDRGGAVKIPSWAKEKEDDEKRTSRDRSEERWDSQLAESLKGLYWNILDAGEVRLEADIKDGGMTLLTAISPYANWLQGNADIRLQVGGTVDHPVLDGSASFHRASISSPVLRKPLTNFGGTLHVKSNRLCITSLESRVSRKGKLVVKGNLPLRSNEASAGDGIELKCEVLEVRAKNFLSCQVDTQLQITGSMLQPTISGNIKLSQGEAYLPHDKGGGAAPLNRLAANQYSIPGAAINQAVSSRYFARFFGTERASSGMKFSQSTGKSNSVEKEIEEVKMKPNMDIRLSDMKLVLGPELRIMYPLILNFAVSGELELDGMAHPKFIKPKGVLTFENGDVNLVATQVRLKREHLNVAKFEPEHGLDPLLDLALVGSEWQFRVQSRASNWQDKLVVTSTRSVEQDALSPSEAAKVFESQLAESILEGDGQLAFKKLATATLGTIMPRIEGKGEFGQARWRLVYAPQIPSLLSVDPTVDPLKSLASNISFGTEVEVQLGKRLQASVVRQMKDSEMAMQWTLIYQLTSRLRVLLQSAPSKRLLFEYSATSQD.

The N-terminal 37 residues, 1–37 (MSLRLQNPFLSTPLLHGSFNRREKRINVARRAFRSKR), are a transit peptide targeting the chloroplast. Residues 38 to 101 (IYSEKKQNDW…RSLAPVWEEG (64 aa)) are Stromal-facing. The helical transmembrane segment at 102–122 (LFFLRCSVFFAVISGVCLLVW) threads the bilayer. At 123–2166 (YGQNKARVFV…LFEYSATSQD (2044 aa)) the chain is on the chloroplast intermembrane side. The disordered stretch occupies residues 1611-1649 (MSEGEVSETDRGGAVKIPSWAKEKEDDEKRTSRDRSEER). The segment covering 1631–1649 (AKEKEDDEKRTSRDRSEER) has biased composition (basic and acidic residues).

The protein belongs to the TamB family. In terms of assembly, part of the TIC complex, which can interact with components of the TOC complex to form a larger import complex. Interacts with the TOC complex component TOC75-3.

The protein resides in the plastid. It localises to the chloroplast inner membrane. The protein localises to the chloroplast intermembrane space. Part of the inner chloroplast membrane translocon complex (TIC) which associates with the outer chloroplast membrane translocon complex (TOC) and forms a supercomplex involved in protein precursor import into the chloroplast stroma. Required for the import of HSP93, TIC40 and RBCS protein precursors in the chloroplast stroma. Links the outer and inner membrane translocons of the chloroplast envelope. This Arabidopsis thaliana (Mouse-ear cress) protein is Protein TIC236, chloroplastic.